A 326-amino-acid chain; its full sequence is Cyclin-dependent kinase B2-1 (326 aa).

Residues 28-318 (YEKLEKVGEG…AKKAMEHPYF (291 aa)) form the Protein kinase domain. Residues 34–42 (VGEGTYGKV) and Lys57 contribute to the ATP site. Residue Thr38 is modified to Phosphothreonine. Tyr39 is modified (phosphotyrosine). Asp159 serves as the catalytic Proton acceptor. A Phosphothreonine modification is found at Thr193.

Belongs to the protein kinase superfamily. CMGC Ser/Thr protein kinase family. CDC2/CDKX subfamily. As to quaternary structure, interacts with CYCB2-1 and CYCB2-2. Binding to CYCB2-1 or CYCB2-2 activates CDK kinase. In terms of tissue distribution, expressed in the dividing region of the root apex and the intercalary meristem of internodes.

It is found in the nucleus. The protein resides in the cytoplasm. Its subcellular location is the cytoskeleton. It localises to the spindle. The protein localises to the phragmoplast. The catalysed reaction is L-seryl-[protein] + ATP = O-phospho-L-seryl-[protein] + ADP + H(+). The enzyme catalyses L-threonyl-[protein] + ATP = O-phospho-L-threonyl-[protein] + ADP + H(+). It carries out the reaction [DNA-directed RNA polymerase] + ATP = phospho-[DNA-directed RNA polymerase] + ADP + H(+). Forms a complex with CYCB2-1 or CYCB2-2 that activates CDK kinase in tobacco BY2 cells during G2/M (mitosis) phases. May be involved in the regulation of the cell cycle at the G2/M transition. This Oryza sativa subsp. japonica (Rice) protein is Cyclin-dependent kinase B2-1 (CDKB2-1).